Reading from the N-terminus, the 227-residue chain is 2-C-methyl-D-erythritol 4-phosphate cytidylyltransferase (227 aa).

The protein belongs to the IspD/TarI cytidylyltransferase family. IspD subfamily.

The enzyme catalyses 2-C-methyl-D-erythritol 4-phosphate + CTP + H(+) = 4-CDP-2-C-methyl-D-erythritol + diphosphate. The protein operates within isoprenoid biosynthesis; isopentenyl diphosphate biosynthesis via DXP pathway; isopentenyl diphosphate from 1-deoxy-D-xylulose 5-phosphate: step 2/6. Catalyzes the formation of 4-diphosphocytidyl-2-C-methyl-D-erythritol from CTP and 2-C-methyl-D-erythritol 4-phosphate (MEP). The polypeptide is 2-C-methyl-D-erythritol 4-phosphate cytidylyltransferase (Petrotoga mobilis (strain DSM 10674 / SJ95)).